The chain runs to 89 residues: CRISPR-associated endoribonuclease Cas2 2 (89 aa).

Mg(2+) is bound at residue aspartate 9.

The protein belongs to the CRISPR-associated endoribonuclease Cas2 protein family. Homodimer, forms a heterotetramer with a Cas1 homodimer. The cofactor is Mg(2+).

In terms of biological role, CRISPR (clustered regularly interspaced short palindromic repeat), is an adaptive immune system that provides protection against mobile genetic elements (viruses, transposable elements and conjugative plasmids). CRISPR clusters contain sequences complementary to antecedent mobile elements and target invading nucleic acids. CRISPR clusters are transcribed and processed into CRISPR RNA (crRNA). Functions as a ssRNA-specific endoribonuclease. Involved in the integration of spacer DNA into the CRISPR cassette. The polypeptide is CRISPR-associated endoribonuclease Cas2 2 (Methanospirillum hungatei JF-1 (strain ATCC 27890 / DSM 864 / NBRC 100397 / JF-1)).